We begin with the raw amino-acid sequence, 791 residues long: RNA-directed RNA polymerase (791 aa).

One can recognise a RdRp catalytic domain in the interval 491-607; the sequence is PVAIGFDMKR…ICEKECAAVV (117 aa).

Belongs to the tombusviridae RNA polymerase family.

The protein resides in the host mitochondrion. It carries out the reaction RNA(n) + a ribonucleoside 5'-triphosphate = RNA(n+1) + diphosphate. Functionally, RNA-dependent RNA polymerase that plays an essential role in the virus replication. Induces the reorganization of host mitochondria and the formation of structures with numerous dilations surrounded by double membranes, which may provide a protected environment to viral replication. In Melon necrotic spot virus (MNSV), this protein is RNA-directed RNA polymerase.